The sequence spans 415 residues: Gamma-glutamyl phosphate reductase (415 aa).

It belongs to the gamma-glutamyl phosphate reductase family.

Its subcellular location is the cytoplasm. It catalyses the reaction L-glutamate 5-semialdehyde + phosphate + NADP(+) = L-glutamyl 5-phosphate + NADPH + H(+). Its pathway is amino-acid biosynthesis; L-proline biosynthesis; L-glutamate 5-semialdehyde from L-glutamate: step 2/2. In terms of biological role, catalyzes the NADPH-dependent reduction of L-glutamate 5-phosphate into L-glutamate 5-semialdehyde and phosphate. The product spontaneously undergoes cyclization to form 1-pyrroline-5-carboxylate. In Bacillus thuringiensis subsp. konkukian (strain 97-27), this protein is Gamma-glutamyl phosphate reductase.